We begin with the raw amino-acid sequence, 203 residues long: 22.3 kDa class VI heat shock protein (203 aa).

The sHSP domain occupies Ala86 to Ala203.

It belongs to the small heat shock protein (HSP20) family. In terms of assembly, may form oligomeric structures.

The protein localises to the cytoplasm. The protein is 22.3 kDa class VI heat shock protein (HSP22.3) of Oryza sativa subsp. japonica (Rice).